Reading from the N-terminus, the 523-residue chain is Carboxypeptidase Y (523 aa).

A signal peptide spans 1-20; it reads MILHTYIILSLLTIFPKAIG. The propeptide occupies 21–107; that stretch reads LSLQMPMALE…QELPNYRLRV (87 aa). 5 disulfides stabilise this stretch: cysteine 162/cysteine 401, cysteine 296/cysteine 310, cysteine 320/cysteine 343, cysteine 327/cysteine 336, and cysteine 365/cysteine 371. The N-linked (GlcNAc...) asparagine glycan is linked to asparagine 193. Serine 249 is an active-site residue. N-linked (GlcNAc...) asparagine glycosylation occurs at asparagine 271. The active site involves aspartate 441. 2 N-linked (GlcNAc...) asparagine glycosylation sites follow: asparagine 484 and asparagine 487. Histidine 498 is an active-site residue.

Belongs to the peptidase S10 family.

The protein resides in the vacuole. It carries out the reaction Release of a C-terminal amino acid with broad specificity.. Functionally, involved in degradation of small peptides. The protein is Carboxypeptidase Y (PRC1) of Komagataella phaffii (strain GS115 / ATCC 20864) (Yeast).